The chain runs to 398 residues: Argininosuccinate synthase (398 aa).

Alanine 8–threonine 16 provides a ligand contact to ATP. Residue tyrosine 87 participates in L-citrulline binding. Glycine 117 serves as a coordination point for ATP. L-aspartate contacts are provided by threonine 119, asparagine 123, and aspartate 124. Asparagine 123 is an L-citrulline binding site. 4 residues coordinate L-citrulline: arginine 127, serine 175, glutamate 259, and tyrosine 271.

Belongs to the argininosuccinate synthase family. Type 1 subfamily. In terms of assembly, homotetramer.

It is found in the cytoplasm. The catalysed reaction is L-citrulline + L-aspartate + ATP = 2-(N(omega)-L-arginino)succinate + AMP + diphosphate + H(+). It functions in the pathway amino-acid biosynthesis; L-arginine biosynthesis; L-arginine from L-ornithine and carbamoyl phosphate: step 2/3. This is Argininosuccinate synthase from Corynebacterium jeikeium (strain K411).